The chain runs to 316 residues: Ribosomal RNA small subunit methyltransferase H (316 aa).

S-adenosyl-L-methionine contacts are provided by residues 32 to 34, aspartate 52, phenylalanine 79, aspartate 100, and glutamine 107; that span reads AGH.

Belongs to the methyltransferase superfamily. RsmH family.

The protein resides in the cytoplasm. It carries out the reaction cytidine(1402) in 16S rRNA + S-adenosyl-L-methionine = N(4)-methylcytidine(1402) in 16S rRNA + S-adenosyl-L-homocysteine + H(+). In terms of biological role, specifically methylates the N4 position of cytidine in position 1402 (C1402) of 16S rRNA. This Lysinibacillus sphaericus (strain C3-41) protein is Ribosomal RNA small subunit methyltransferase H.